Here is a 367-residue protein sequence, read N- to C-terminus: Alginate lyase (367 aa).

A signal peptide spans 1–27 (MKTSHLIRIALPGALAAALLASQVSQA). Substrate-binding positions include 65-66 (SK), 138-139 (HT), and tyrosine 256.

This sequence belongs to the polysaccharide lyase 5 family.

The protein resides in the periplasm. The catalysed reaction is Eliminative cleavage of alginate to give oligosaccharides with 4-deoxy-alpha-L-erythro-hex-4-enuronosyl groups at their non-reducing ends and beta-D-mannuronate at their reducing end.. In terms of biological role, catalyzes the depolymerization of alginate by cleaving the beta-1,4 glycosidic bond between two adjacent sugar residues via a beta-elimination mechanism. May serve to degrade mislocalized alginate that is trapped in the periplasmic space. Acts preferentially on non-acetylated alginate or its precursor mannuronan. Is able to catalyze cleavage adjacent to either mannuronate or guluronate residues in alginate. Exhaustive digestion of alginate by AlgL generates dimeric and trimeric products. In addition to its enzymatic function, AlgL appears to be required for alginate export, maybe as part of a multi-protein alginate-secretion complex. The polypeptide is Alginate lyase (Pseudomonas aeruginosa (strain ATCC 15692 / DSM 22644 / CIP 104116 / JCM 14847 / LMG 12228 / 1C / PRS 101 / PAO1)).